A 199-amino-acid polypeptide reads, in one-letter code: uncharacterized protein (199 aa).

The stretch at 72 to 116 (EIYSEIENEESDIEEMSEEMKAFFAKTQEHRQKLKEQRAAEKRKE) forms a coiled coil. Basic and acidic residues predominate over residues 98–117 (TQEHRQKLKEQRAAEKRKEG). A disordered region spans residues 98 to 127 (TQEHRQKLKEQRAAEKRKEGQSSSKSQEEY).

This is an uncharacterized protein from Caenorhabditis elegans.